Here is a 252-residue protein sequence, read N- to C-terminus: Chitooligosaccharide deacetylase (252 aa).

H61 and H125 together coordinate Mg(2+).

Belongs to the YdjC deacetylase family. ChbG subfamily. Homodimer. Mg(2+) is required as a cofactor.

It localises to the cytoplasm. It carries out the reaction N,N'-diacetylchitobiose + H2O = N-acetyl-beta-D-glucosaminyl-(1-&gt;4)-D-glucosamine + acetate. The enzyme catalyses diacetylchitobiose-6'-phosphate + H2O = N'-monoacetylchitobiose-6'-phosphate + acetate. The protein operates within glycan degradation; chitin degradation. Its function is as follows. Involved in the degradation of chitin. ChbG is essential for growth on the acetylated chitooligosaccharides chitobiose and chitotriose but is dispensable for growth on cellobiose and chitosan dimer, the deacetylated form of chitobiose. Deacetylation of chitobiose-6-P and chitotriose-6-P is necessary for both the activation of the chb promoter by the regulatory protein ChbR and the hydrolysis of phosphorylated beta-glucosides by the phospho-beta-glucosidase ChbF. Catalyzes the removal of only one acetyl group from chitobiose-6-P to yield monoacetylchitobiose-6-P, the inducer of ChbR and the substrate of ChbF. The protein is Chitooligosaccharide deacetylase of Salmonella dublin (strain CT_02021853).